Here is a 133-residue protein sequence, read N- to C-terminus: CDGSH iron-sulfur domain-containing protein 2 homolog (133 aa).

Over 1 to 35 (MEPISHLVKSSLPNYLSSLPIPDSIGGWFKLSFKD) the chain is Lumenal. Residues 36–58 (WLALIPPTVVVAGLGYTAYLAYC) form a helical membrane-spanning segment. Residues 59–133 (PAAQGSCSAK…DNVGPIVIKK (75 aa)) lie on the Cytoplasmic side of the membrane. [2Fe-2S] cluster is bound by residues Cys-100, Cys-102, Cys-111, and His-115.

The protein belongs to the CISD protein family. CISD2 subfamily. The cofactor is [2Fe-2S] cluster.

The protein localises to the endoplasmic reticulum membrane. This Drosophila erecta (Fruit fly) protein is CDGSH iron-sulfur domain-containing protein 2 homolog.